Here is a 386-residue protein sequence, read N- to C-terminus: HORMA domain-containing protein 1 (386 aa).

The HORMA domain maps to 24 to 224 (TQSLILVKRL…TPFHVLKVKV (201 aa)). Disordered stretches follow at residues 237 to 274 (SIFKKQASKQPQTDEEKPDLSINDDLAQDNNGDRKRDD) and 289 to 386 (EDGN…TPLN). The span at 289-313 (EDGNLQSDDSQNSALADSQEKTSQA) shows a compositional bias: polar residues. The segment covering 329–343 (QKPDLELKNQKESAR) has biased composition (basic and acidic residues).

Its subcellular location is the nucleus. The protein localises to the chromosome. Its function is as follows. Plays a key role in meiotic progression by ensuring that sufficient numbers of processed DNA double-strand breaks (DSBs) are available for successful homology search, promoting synaptonemal-complex formation independently and playing key role in the male mid-pachytene checkpoint and the female meiotic prophase checkpoint. The chain is HORMA domain-containing protein 1 (hormad1) from Xenopus laevis (African clawed frog).